The primary structure comprises 441 residues: Serine--tRNA ligase (441 aa).

250-252 (TSE) provides a ligand contact to L-serine. ATP contacts are provided by residues 281–283 (RRE) and valine 297. Glutamate 304 provides a ligand contact to L-serine. 368-371 (EIVS) serves as a coordination point for ATP. L-serine is bound at residue threonine 402.

It belongs to the class-II aminoacyl-tRNA synthetase family. Type-1 seryl-tRNA synthetase subfamily. Homodimer. The tRNA molecule binds across the dimer.

The protein resides in the cytoplasm. The catalysed reaction is tRNA(Ser) + L-serine + ATP = L-seryl-tRNA(Ser) + AMP + diphosphate + H(+). It carries out the reaction tRNA(Sec) + L-serine + ATP = L-seryl-tRNA(Sec) + AMP + diphosphate + H(+). The protein operates within aminoacyl-tRNA biosynthesis; selenocysteinyl-tRNA(Sec) biosynthesis; L-seryl-tRNA(Sec) from L-serine and tRNA(Sec): step 1/1. Catalyzes the attachment of serine to tRNA(Ser). Is also able to aminoacylate tRNA(Sec) with serine, to form the misacylated tRNA L-seryl-tRNA(Sec), which will be further converted into selenocysteinyl-tRNA(Sec). The protein is Serine--tRNA ligase of Thermoplasma acidophilum (strain ATCC 25905 / DSM 1728 / JCM 9062 / NBRC 15155 / AMRC-C165).